Reading from the N-terminus, the 72-residue chain is Translation initiation factor IF-1 (72 aa).

Residues 1–72 form the S1-like domain; sequence MAKEDSIEMQ…SKGRIVFRAR (72 aa).

The protein belongs to the IF-1 family. Component of the 30S ribosomal translation pre-initiation complex which assembles on the 30S ribosome in the order IF-2 and IF-3, IF-1 and N-formylmethionyl-tRNA(fMet); mRNA recruitment can occur at any time during PIC assembly.

It localises to the cytoplasm. Its function is as follows. One of the essential components for the initiation of protein synthesis. Stabilizes the binding of IF-2 and IF-3 on the 30S subunit to which N-formylmethionyl-tRNA(fMet) subsequently binds. Helps modulate mRNA selection, yielding the 30S pre-initiation complex (PIC). Upon addition of the 50S ribosomal subunit IF-1, IF-2 and IF-3 are released leaving the mature 70S translation initiation complex. The chain is Translation initiation factor IF-1 from Psychromonas ingrahamii (strain DSM 17664 / CCUG 51855 / 37).